The chain runs to 1598 residues: Mushroom body large-type Kenyon cell-specific protein 1 (1598 aa).

Disordered regions lie at residues 83 to 105, 140 to 387, 436 to 462, and 495 to 525; these read PGNL…SLPA, RHHH…SDGI, PHDD…PMSV, and PLVG…SQDN. The segment covering 140-151 has biased composition (basic residues); sequence RHHHLQNHHHHL. The segment covering 164 to 174 has biased composition (low complexity); it reads QQQQQQQQRQQ. Residues 175–191 show a composition bias toward basic and acidic residues; the sequence is QRQEERRLRPDEIKVEV. The span at 210–263 shows a compositional bias: low complexity; the sequence is STDASTPATVTTTGATTTLPAASATGTGPATPSAVVATSNATAAMTTGTTTIPT. Positions 275–291 are enriched in acidic residues; sequence EGADDRDDDEENEEEED. Composition is skewed to basic and acidic residues over residues 292–305, 315–324, and 335–346; these read GRGQ…LKLD, LRREKDRGSR, and DGTKERTEEVAL. A Phosphoserine; by MAPK modification is found at Ser-444. Residues 445–461 show a composition bias toward low complexity; the sequence is PQSDSSSSSRSAESPMS. In terms of domain architecture, HTH psq-type 1 spans 582 to 634; it reads VGAGGGRRAYTEEELQAALRDIQSGKLGTRRAAVIYGIPRSTLRNKVYKLAME. Positions 610–630 form a DNA-binding region, H-T-H motif; the sequence is TRRAAVIYGIPRSTLRNKVYK. Disordered stretches follow at residues 636–705, 797–877, 962–1045, 1082–1145, 1248–1283, and 1301–1598; these read ERDA…SGAE, RLSK…DSAQ, GQTV…NYDR, ERHL…NGIK, ETSA…NGSF, and RAMT…SVEQ. Residues 653–687 are compositionally biased toward low complexity; that stretch reads APATTITTITTTTTTTTTTTTTTTTPNTTQNASAT. Acidic residues predominate over residues 694–705; sequence DEVDDKELSGAE. The span at 820–855 shows a compositional bias: low complexity; it reads THPQAQAQAQPQQQQQQQQQQPQQQQQQQQQQQQQQ. Residues 965–975 are compositionally biased toward gly residues; it reads VSGGGMGGCQP. Over residues 1003–1021 the composition is skewed to low complexity; that stretch reads ANAQQGQAQAQAKPQSQEA. In terms of domain architecture, HTH psq-type 2 spans 1034–1086; it reads RPKRGKYRNYDRDSLVEAVRAVQRGEMSVHRAGSYYGVPHSTLEYKVKERHLM. A DNA-binding region (H-T-H motif) is located at residues 1062–1082; sequence VHRAGSYYGVPHSTLEYKVKE. Basic and acidic residues predominate over residues 1093–1102; it reads QKQSDDKTKE. Over residues 1103-1120 the composition is skewed to low complexity; that stretch reads TSTVTAAAAATNIRPGTA. The span at 1309 to 1318 shows a compositional bias: low complexity; the sequence is QQQQASSQQQ. 2 stretches are compositionally biased toward basic and acidic residues: residues 1383–1392 and 1407–1442; these read DRGRNDDGSD and GSRD…DRKT. Residues 1447–1466 show a composition bias toward low complexity; that stretch reads PQQPQQQQQQQQQQQQQQQQ. A compositionally biased stretch (basic and acidic residues) spans 1481 to 1497; the sequence is TDKKSACDSKLIVDHSS. Positions 1501–1547 are enriched in low complexity; it reads QQQQPQQQQQQQQQQQPQQQSQQPQQQQPQPQQQQQQQQQQQPQQQQ. Positions 1562 to 1577 are enriched in polar residues; it reads RGYNSGNNRSGEQANS.

In terms of assembly, homodimer. Large-type Kenyon cells of mushroom body.

It is found in the nucleus. In terms of biological role, transcriptional activator which binds to the consensus sequence 5'-CCCTATCGATCGATCTCTACCT-3'. May play a role in higher-order sensory processing. This chain is Mushroom body large-type Kenyon cell-specific protein 1 (Mblk-1), found in Apis mellifera (Honeybee).